The chain runs to 1154 residues: Coiled-coil domain-containing protein 136 (1154 aa).

The interval Met-1–His-48 is disordered. The span at Tyr-14–Glu-32 shows a compositional bias: acidic residues. Position 52 is a phosphoserine (Ser-52). Coiled coils occupy residues Gln-696 to Gln-733 and Lys-859 to Val-974. Positions Asp-1031–Cys-1058 are enriched in basic and acidic residues. Residues Asp-1031 to Phe-1131 form a disordered region. Positions Asp-1077–Glu-1109 are enriched in acidic residues. The chain crosses the membrane as a helical span at residues Ile-1130–Ala-1150.

As to expression, expressed in gastric tissues. Down-regulated in gastric cancer.

The protein resides in the cytoplasmic vesicle. The protein localises to the secretory vesicle. Its subcellular location is the acrosome membrane. Its function is as follows. May play a role in acrosome formation in spermatogenesis and in fertilization. The polypeptide is Coiled-coil domain-containing protein 136 (CCDC136) (Homo sapiens (Human)).